The chain runs to 741 residues: Catalase-peroxidase 2 (741 aa).

Residues 1-28 (MQKKRIGKSVVAALAIIAMSAGTVAAWA) form the signal peptide. A cross-link (tryptophyl-tyrosyl-methioninium (Trp-Tyr) (with M-254)) is located at residues 107 to 228 (WHGAGTYRTY…LAATQMGLIY (122 aa)). The active-site Proton acceptor is the histidine 108. Positions 228-254 (YVNPEGPNGNPDPVAAAKDIREAFGRM) form a cross-link, tryptophyl-tyrosyl-methioninium (Tyr-Met) (with W-107). Histidine 269 contacts heme b.

Belongs to the peroxidase family. Peroxidase/catalase subfamily. In terms of assembly, homodimer or homotetramer. Requires heme b as cofactor. Post-translationally, formation of the three residue Trp-Tyr-Met cross-link is important for the catalase, but not the peroxidase activity of the enzyme.

It carries out the reaction H2O2 + AH2 = A + 2 H2O. The enzyme catalyses 2 H2O2 = O2 + 2 H2O. Bifunctional enzyme with both catalase and broad-spectrum peroxidase activity. This is Catalase-peroxidase 2 from Burkholderia ambifaria (strain MC40-6).